We begin with the raw amino-acid sequence, 274 residues long: 4-diphosphocytidyl-2-C-methyl-D-erythritol kinase (274 aa).

The active site involves lysine 14. 94–104 (PMQAGLGGGSS) lines the ATP pocket. The active site involves aspartate 134.

Belongs to the GHMP kinase family. IspE subfamily.

It catalyses the reaction 4-CDP-2-C-methyl-D-erythritol + ATP = 4-CDP-2-C-methyl-D-erythritol 2-phosphate + ADP + H(+). It participates in isoprenoid biosynthesis; isopentenyl diphosphate biosynthesis via DXP pathway; isopentenyl diphosphate from 1-deoxy-D-xylulose 5-phosphate: step 3/6. Functionally, catalyzes the phosphorylation of the position 2 hydroxy group of 4-diphosphocytidyl-2C-methyl-D-erythritol. The sequence is that of 4-diphosphocytidyl-2-C-methyl-D-erythritol kinase from Thermosipho melanesiensis (strain DSM 12029 / CIP 104789 / BI429).